The following is a 185-amino-acid chain: Elongation factor P (185 aa).

Belongs to the elongation factor P family.

The protein localises to the cytoplasm. It participates in protein biosynthesis; polypeptide chain elongation. Functionally, involved in peptide bond synthesis. Stimulates efficient translation and peptide-bond synthesis on native or reconstituted 70S ribosomes in vitro. Probably functions indirectly by altering the affinity of the ribosome for aminoacyl-tRNA, thus increasing their reactivity as acceptors for peptidyl transferase. The polypeptide is Elongation factor P (Deinococcus radiodurans (strain ATCC 13939 / DSM 20539 / JCM 16871 / CCUG 27074 / LMG 4051 / NBRC 15346 / NCIMB 9279 / VKM B-1422 / R1)).